A 430-amino-acid polypeptide reads, in one-letter code: Tol-Pal system protein TolB (430 aa).

The signal sequence occupies residues 1 to 21 (MKQALRVAFGFLILWASVLHA).

The protein belongs to the TolB family. The Tol-Pal system is composed of five core proteins: the inner membrane proteins TolA, TolQ and TolR, the periplasmic protein TolB and the outer membrane protein Pal. They form a network linking the inner and outer membranes and the peptidoglycan layer.

The protein resides in the periplasm. Part of the Tol-Pal system, which plays a role in outer membrane invagination during cell division and is important for maintaining outer membrane integrity. TolB occupies a key intermediary position in the Tol-Pal system because it communicates directly with both membrane-embedded components, Pal in the outer membrane and TolA in the inner membrane. In Shigella dysenteriae serotype 1 (strain Sd197), this protein is Tol-Pal system protein TolB.